The chain runs to 265 residues: Glutamate racemase (265 aa).

Substrate is bound by residues 9–10 and 41–42; these read DS and YG. Cys-73 acts as the Proton donor/acceptor in catalysis. 74–75 contributes to the substrate binding site; that stretch reads NT. The active-site Proton donor/acceptor is Cys-180. 181–182 contributes to the substrate binding site; sequence TH.

The protein belongs to the aspartate/glutamate racemases family.

It catalyses the reaction L-glutamate = D-glutamate. It participates in cell wall biogenesis; peptidoglycan biosynthesis. Functionally, provides the (R)-glutamate required for cell wall biosynthesis. The sequence is that of Glutamate racemase from Aliivibrio salmonicida (strain LFI1238) (Vibrio salmonicida (strain LFI1238)).